Reading from the N-terminus, the 104-residue chain is Large ribosomal subunit protein uL24 (104 aa).

Belongs to the universal ribosomal protein uL24 family. In terms of assembly, part of the 50S ribosomal subunit.

Functionally, one of two assembly initiator proteins, it binds directly to the 5'-end of the 23S rRNA, where it nucleates assembly of the 50S subunit. In terms of biological role, one of the proteins that surrounds the polypeptide exit tunnel on the outside of the subunit. This Mesorhizobium japonicum (strain LMG 29417 / CECT 9101 / MAFF 303099) (Mesorhizobium loti (strain MAFF 303099)) protein is Large ribosomal subunit protein uL24.